The sequence spans 299 residues: Protease HtpX homolog (299 aa).

2 helical membrane-spanning segments follow: residues 14-34 (WLLL…VGYL) and 39-59 (GFGG…TMIF). H143 provides a ligand contact to Zn(2+). E144 is an active-site residue. H147 is a binding site for Zn(2+). Transmembrane regions (helical) follow at residues 153–173 (IRIS…AVMA) and 198–218 (IILL…ATLV). E227 contacts Zn(2+).

Belongs to the peptidase M48B family. Zn(2+) is required as a cofactor.

Its subcellular location is the cell membrane. In Streptococcus thermophilus (strain CNRZ 1066), this protein is Protease HtpX homolog.